A 237-amino-acid polypeptide reads, in one-letter code: MTGYKRVLLKLSGEMFGGGKVGVDPDVVQTVAREIAAVVNAGVQIAIVTGGGNFFRGAELQQRGMDRVRADYMGMLGIVMNCLALQDFLEKLGVETRVQTAITMGQVAEPYIPRRAIRHMEKGRVVIFGAGMGMPFFSTDTVAVQRALESRCDVVLVAKNGVDGVYTADPHKDPTATKFDDLTYDEAIARGLRIMDQTAFALCGENKLPMVVFGMEPEGNILRVVQGERIGTLVTAG.

Residue 10–13 (KLSG) participates in ATP binding. Gly-51 contacts UMP. ATP-binding residues include Gly-52 and Arg-56. Residues Asp-71 and 132 to 139 (MGMPFFST) contribute to the UMP site. ATP-binding residues include Asn-160, Tyr-166, and Asp-169.

The protein belongs to the UMP kinase family. In terms of assembly, homohexamer.

Its subcellular location is the cytoplasm. It carries out the reaction UMP + ATP = UDP + ADP. The protein operates within pyrimidine metabolism; CTP biosynthesis via de novo pathway; UDP from UMP (UMPK route): step 1/1. With respect to regulation, inhibited by UTP. Functionally, catalyzes the reversible phosphorylation of UMP to UDP. This Nocardioides sp. (strain ATCC BAA-499 / JS614) protein is Uridylate kinase.